An 82-amino-acid polypeptide reads, in one-letter code: Small ribosomal subunit protein uS17 (82 aa).

It belongs to the universal ribosomal protein uS17 family. In terms of assembly, part of the 30S ribosomal subunit.

In terms of biological role, one of the primary rRNA binding proteins, it binds specifically to the 5'-end of 16S ribosomal RNA. In Rhodopseudomonas palustris (strain TIE-1), this protein is Small ribosomal subunit protein uS17.